The sequence spans 233 residues: Biosynthetic peptidoglycan transglycosylase (233 aa).

The chain crosses the membrane as a helical span at residues 17-37 (IVLAVLALVVLPYVLIFFYLL).

The protein belongs to the glycosyltransferase 51 family.

The protein localises to the cell inner membrane. It carries out the reaction [GlcNAc-(1-&gt;4)-Mur2Ac(oyl-L-Ala-gamma-D-Glu-L-Lys-D-Ala-D-Ala)](n)-di-trans,octa-cis-undecaprenyl diphosphate + beta-D-GlcNAc-(1-&gt;4)-Mur2Ac(oyl-L-Ala-gamma-D-Glu-L-Lys-D-Ala-D-Ala)-di-trans,octa-cis-undecaprenyl diphosphate = [GlcNAc-(1-&gt;4)-Mur2Ac(oyl-L-Ala-gamma-D-Glu-L-Lys-D-Ala-D-Ala)](n+1)-di-trans,octa-cis-undecaprenyl diphosphate + di-trans,octa-cis-undecaprenyl diphosphate + H(+). It functions in the pathway cell wall biogenesis; peptidoglycan biosynthesis. Functionally, peptidoglycan polymerase that catalyzes glycan chain elongation from lipid-linked precursors. This is Biosynthetic peptidoglycan transglycosylase from Rhizobium etli (strain ATCC 51251 / DSM 11541 / JCM 21823 / NBRC 15573 / CFN 42).